Consider the following 234-residue polypeptide: Leucyl/phenylalanyl-tRNA--protein transferase (234 aa).

Belongs to the L/F-transferase family.

Its subcellular location is the cytoplasm. It carries out the reaction N-terminal L-lysyl-[protein] + L-leucyl-tRNA(Leu) = N-terminal L-leucyl-L-lysyl-[protein] + tRNA(Leu) + H(+). The enzyme catalyses N-terminal L-arginyl-[protein] + L-leucyl-tRNA(Leu) = N-terminal L-leucyl-L-arginyl-[protein] + tRNA(Leu) + H(+). It catalyses the reaction L-phenylalanyl-tRNA(Phe) + an N-terminal L-alpha-aminoacyl-[protein] = an N-terminal L-phenylalanyl-L-alpha-aminoacyl-[protein] + tRNA(Phe). In terms of biological role, functions in the N-end rule pathway of protein degradation where it conjugates Leu, Phe and, less efficiently, Met from aminoacyl-tRNAs to the N-termini of proteins containing an N-terminal arginine or lysine. This chain is Leucyl/phenylalanyl-tRNA--protein transferase, found in Salmonella paratyphi A (strain ATCC 9150 / SARB42).